The following is a 289-amino-acid chain: Acetyl-coenzyme A carboxylase carboxyl transferase subunit beta (289 aa).

The CoA carboxyltransferase N-terminal domain occupies 27–289 (LWSKCPSCES…SFMRVPAGAA (263 aa)). 4 residues coordinate Zn(2+): cysteine 31, cysteine 34, cysteine 50, and cysteine 53. A C4-type zinc finger spans residues 31-53 (CPSCESVLYRTDLESNSEVCPKC).

This sequence belongs to the AccD/PCCB family. As to quaternary structure, acetyl-CoA carboxylase is a heterohexamer composed of biotin carboxyl carrier protein (AccB), biotin carboxylase (AccC) and two subunits each of ACCase subunit alpha (AccA) and ACCase subunit beta (AccD). Zn(2+) serves as cofactor.

Its subcellular location is the cytoplasm. The enzyme catalyses N(6)-carboxybiotinyl-L-lysyl-[protein] + acetyl-CoA = N(6)-biotinyl-L-lysyl-[protein] + malonyl-CoA. The protein operates within lipid metabolism; malonyl-CoA biosynthesis; malonyl-CoA from acetyl-CoA: step 1/1. Functionally, component of the acetyl coenzyme A carboxylase (ACC) complex. Biotin carboxylase (BC) catalyzes the carboxylation of biotin on its carrier protein (BCCP) and then the CO(2) group is transferred by the transcarboxylase to acetyl-CoA to form malonyl-CoA. The polypeptide is Acetyl-coenzyme A carboxylase carboxyl transferase subunit beta (Methylobacillus flagellatus (strain ATCC 51484 / DSM 6875 / VKM B-1610 / KT)).